A 554-amino-acid chain; its full sequence is (+)-delta-cadinene synthase isozyme XC14 (554 aa).

The span at 1–16 shows a compositional bias: low complexity; it reads MASQVSQMPSSSPLSS. The disordered stretch occupies residues 1–23; the sequence is MASQVSQMPSSSPLSSNKDEMRP. 3 residues coordinate Mg(2+): D307, D311, and D451. Residues 307–311 carry the DDXXD motif motif; sequence DDTYD.

It belongs to the terpene synthase family. Mg(2+) serves as cofactor.

It catalyses the reaction (2E,6E)-farnesyl diphosphate = (1S,8aR)-delta-cadinene + diphosphate. The protein operates within secondary metabolite biosynthesis; terpenoid biosynthesis. Functionally, responsible for the cyclization of trans,trans-farnesyl diphosphate (FPP) to (+)-delta cadinene. This is (+)-delta-cadinene synthase isozyme XC14 from Gossypium arboreum (Tree cotton).